Here is a 587-residue protein sequence, read N- to C-terminus: Kelch-like protein 3 (587 aa).

The disordered stretch occupies residues 1–22 (MDGESIKPSSQPLIQTGDDEKN). Serine 10 is modified (phosphoserine). A BTB domain is found at 50 to 117 (CDVMIVAEDV…IYTAEIEVTE (68 aa)). The 103-residue stretch at 152–254 (CLGIRAFADV…PRDYLVQTVE (103 aa)) folds into the BACK domain. The residue at position 295 (threonine 295) is a Phosphothreonine. Kelch repeat units lie at residues 302–347 (VMIV…FMAG), 348–394 (HVYA…VLND), 396–441 (LYAV…VVEG), 442–490 (KLYA…VLSG), 491–537 (QLYA…AVNG), and 539–585 (LYVV…VIHK). Threonine 375 is modified (phosphothreonine). Serine 376 and serine 433 each carry phosphoserine.

Belongs to the KLHL3 family. Homodimer. Component of the BCR(KLHL3) E3 ubiquitin ligase complex, at least composed of CUL3 and KLHL3 and RBX1. Interacts with CLDN8. Phosphorylation at Ser-433 by PKA or PKC decreases the interaction with WNK1 and WNK4, leading to inhibit their degradation by the BCR(KLHL3) complex. Phosphorylated at Ser-433 by PKC in response to angiotensin II signaling, decreasing ability to promote degradation of WNK1 and WNK4, leading to activation of Na-Cl cotransporter SLC12A3/NCC. Phosphorylation at Ser-433 is increased by insulin. Dephosphorylated at Ser-433 by calcineurin PPP3CA, promoting degradation of WNK1 and WNK4.

The protein resides in the cytoplasm. It localises to the cytoskeleton. The protein localises to the cytosol. The protein operates within protein modification; protein ubiquitination. Functionally, substrate-specific adapter of a BCR (BTB-CUL3-RBX1) E3 ubiquitin ligase complex that acts as a regulator of ion transport in the distal nephron. The BCR(KLHL3) complex acts by mediating ubiquitination and degradation of WNK1 and WNK4, two activators of Na-Cl cotransporter SLC12A3/NCC in distal convoluted tubule cells of kidney, thereby regulating NaCl reabsorption. The BCR(KLHL3) complex also mediates ubiquitination and degradation of WNK3. The BCR(KLHL3) complex also mediates ubiquitination of CLDN8, a tight-junction protein required for paracellular chloride transport in the kidney, leading to its degradation. This Bos taurus (Bovine) protein is Kelch-like protein 3 (KLHL3).